Here is a 166-residue protein sequence, read N- to C-terminus: MINALGLLEVDGMVAAIDAADAMLKAANVRLLSHEVLDPGRLTLVVEGDLAACRAALDAGCAAAMRTGRVISRKEIGRPDDDTQWLVTGFNRQPKQPVREPDAPVIVAESADELLALLTSVRQGMTAGEVAAHFGWPLEKARNALEQLFSAGTLRKRSSRYRLKPH.

The BMC domain maps to 4–88 (ALGLLEVDGM…PDDDTQWLVT (85 aa)). The EutK-Ctail domain occupies 109-165 (ESADELLALLTSVRQGMTAGEVAAHFGWPLEKARNALEQLFSAGTLRKRSSRYRLKP).

The protein belongs to the bacterial microcompartments protein family. Monomeric in solution.

It localises to the bacterial microcompartment. The protein operates within amine and polyamine degradation; ethanolamine degradation. In terms of biological role, probably a minor component of the bacterial microcompartment (BMC) shell dedicated to ethanolamine degradation. It might bind nucleic acids. The polypeptide is Bacterial microcompartment shell protein EutK (eutK) (Escherichia coli (strain K12)).